The following is a 223-amino-acid chain: 3,4-dihydroxy-2-butanone 4-phosphate synthase (223 aa).

D-ribulose 5-phosphate contacts are provided by residues 39-40 (RE), Asp44, 152-156 (RRGHT), and Glu176. Residue Glu40 participates in Mg(2+) binding. His155 serves as a coordination point for Mg(2+).

The protein belongs to the DHBP synthase family. As to quaternary structure, homodimer. It depends on Mg(2+) as a cofactor. The cofactor is Mn(2+).

It carries out the reaction D-ribulose 5-phosphate = (2S)-2-hydroxy-3-oxobutyl phosphate + formate + H(+). It functions in the pathway cofactor biosynthesis; riboflavin biosynthesis; 2-hydroxy-3-oxobutyl phosphate from D-ribulose 5-phosphate: step 1/1. Its function is as follows. Catalyzes the conversion of D-ribulose 5-phosphate to formate and 3,4-dihydroxy-2-butanone 4-phosphate. The protein is 3,4-dihydroxy-2-butanone 4-phosphate synthase of Desulfovibrio desulfuricans (strain ATCC 27774 / DSM 6949 / MB).